Reading from the N-terminus, the 356-residue chain is DNA polymerase IV (356 aa).

A UmuC domain is found at 7 to 188; sequence IIHIDMDCFY…LPLKKIPGVG (182 aa). Mg(2+)-binding residues include Asp11 and Asp106. The active site involves Glu107.

This sequence belongs to the DNA polymerase type-Y family. As to quaternary structure, monomer. The cofactor is Mg(2+).

The protein localises to the cytoplasm. It catalyses the reaction DNA(n) + a 2'-deoxyribonucleoside 5'-triphosphate = DNA(n+1) + diphosphate. In terms of biological role, poorly processive, error-prone DNA polymerase involved in untargeted mutagenesis. Copies undamaged DNA at stalled replication forks, which arise in vivo from mismatched or misaligned primer ends. These misaligned primers can be extended by PolIV. Exhibits no 3'-5' exonuclease (proofreading) activity. May be involved in translesional synthesis, in conjunction with the beta clamp from PolIII. The sequence is that of DNA polymerase IV from Actinobacillus pleuropneumoniae serotype 3 (strain JL03).